Consider the following 251-residue polypeptide: Pyrroline-5-carboxylate reductase (251 aa).

This sequence belongs to the pyrroline-5-carboxylate reductase family.

The protein resides in the cytoplasm. The catalysed reaction is L-proline + NADP(+) = (S)-1-pyrroline-5-carboxylate + NADPH + 2 H(+). It carries out the reaction L-proline + NAD(+) = (S)-1-pyrroline-5-carboxylate + NADH + 2 H(+). The protein operates within amino-acid biosynthesis; L-proline biosynthesis; L-proline from L-glutamate 5-semialdehyde: step 1/1. In terms of biological role, catalyzes the reduction of 1-pyrroline-5-carboxylate (PCA) to L-proline. This is Pyrroline-5-carboxylate reductase (proC) from Methanobrevibacter smithii.